A 203-amino-acid polypeptide reads, in one-letter code: dCTP deaminase (203 aa).

Residues Arg-105–Arg-110, Asp-123, Thr-131–Glu-133, Gln-152, Tyr-166, Lys-173, and Gln-177 each bind dCTP. The active-site Proton donor/acceptor is the Glu-133. The segment at Arg-164–Ser-203 is disordered. A compositionally biased stretch (basic and acidic residues) spans Tyr-166–Asp-176. The span at Ser-187–Ser-203 shows a compositional bias: basic and acidic residues.

The protein belongs to the dCTP deaminase family. As to quaternary structure, homotrimer.

It carries out the reaction dCTP + H2O + H(+) = dUTP + NH4(+). The protein operates within pyrimidine metabolism; dUMP biosynthesis; dUMP from dCTP (dUTP route): step 1/2. In terms of biological role, catalyzes the deamination of dCTP to dUTP. The polypeptide is dCTP deaminase (Halorubrum lacusprofundi (strain ATCC 49239 / DSM 5036 / JCM 8891 / ACAM 34)).